Here is a 718-residue protein sequence, read N- to C-terminus: MLNSTGELEFSNEEDPEIISQLTSLPLSGGKSSAGVPEKTGYPDSVYVMAANIFQGIRIEKSAQKVLIKYGNEPLRSLSESEDQSFQRLSYELAFSALKYQDILETILIDSCIFPSTTIPDHLSSLIIVMLYDFQDRKFQTRVLSDNEEPISEVQEVENLLNSFKIKLAAALARCRIKHDALSIYHILPETVRKQELRASTLPLYAWINTCKISPEEVYNNLKRRGYNKVKSVLHIDDKVFAVDQHCYDVLIFPSHLKNDLINIDLFKDYKLIFQDKSRSLAVHSVKALLNMDDDVLMVNTGSWYTVSHMSILTNNNTSKVFVCGVQSQAKDPDLKTLFTKIGCKNIEILHEKFINIESKDHRLQKVKVILLLPRCSGLGVSNPVEFILNEHEDTEFLKDHSQGGISVDKLHVLAQQQYEQLTHAMKFTKAQAVVYCTCSVFPEENEAVVKKALEFQDLGNKGQPYRLSPPVLPLCSLKEIQLSTDKFFRMEPSEITNGCFLSILTRERDPSETVSVNDVLARAAAKGLLDGIELGKSSKREKKKKKSKTSLTKGATTDNGIQMKIAEFLNRETKASANLSETVTKPPLPQKNTAQVGASSQTRKPNKLAPHPAVPAFVKNTCPSRPRERQTHFLRPRPEDRMVALKPIKIVLPPVFMPFSSPQGIRSRMPTQHLYCRWVAPKALVPTCLPTHSLSRKEEKPKDDTPSSLLRPPRRWL.

Catalysis depends on cysteine 439, which acts as the Nucleophile. Disordered stretches follow at residues 536–557 (GKSSKREKKKKKSKTSLTKGAT), 578–616 (ANLSETVTKPPLPQKNTAQVGASSQTRKPNKLAPHPAVP), and 694–718 (SLSRKEEKPKDDTPSSLLRPPRRWL). The span at 538–549 (SSKREKKKKKSK) shows a compositional bias: basic residues. Residues 591 to 604 (QKNTAQVGASSQTR) show a composition bias toward polar residues. Residues 696–706 (SRKEEKPKDDT) show a composition bias toward basic and acidic residues.

This sequence belongs to the class I-like SAM-binding methyltransferase superfamily. RsmB/NOP family.

Its function is as follows. May have S-adenosyl-L-methionine-dependent methyl-transferase activity. The sequence is that of Putative methyltransferase NSUN7 (NSUN7) from Homo sapiens (Human).